A 66-amino-acid chain; its full sequence is Cold shock protein CspB (66 aa).

The CSD domain occupies 4–63; it reads GKVKWFNNEKGYGFIEVEGGSDVFVHFTAIQGEGFKSLEEGQEVSFEIVQGNRGPQAANV.

Homodimer.

Its subcellular location is the cytoplasm. Its function is as follows. Affects cell viability at low temperatures. The polypeptide is Cold shock protein CspB (cspB) (Geobacillus stearothermophilus (Bacillus stearothermophilus)).